A 385-amino-acid polypeptide reads, in one-letter code: Prophage integrase IntS (385 aa).

In terms of domain architecture, Core-binding (CB) spans 91–172 (NSFSAIYKEW…RCGEVFRYAI (82 aa)). The Tyr recombinase domain maps to 195–373 (KNFPFLPADQ…QYLDKRREMM (179 aa)). Active-site residues include Arg-234, Lys-261, His-324, Arg-327, and His-350. Tyr-360 acts as the O-(3'-phospho-DNA)-tyrosine intermediate in catalysis.

It belongs to the 'phage' integrase family.

Functionally, integrase is necessary for integration of the phage into the host genome by site-specific recombination. In conjunction with excisionase, integrase is also necessary for excision of the prophage from the host genome. The protein is Prophage integrase IntS (intS) of Escherichia coli (strain K12).